The primary structure comprises 245 residues: Epoxyqueuosine reductase QueH (245 aa).

[4Fe-4S] cluster-binding residues include C52, C53, C131, and C134. C214 and C216 form a disulfide bridge.

This sequence belongs to the QueH family.

It catalyses the reaction epoxyqueuosine(34) in tRNA + AH2 = queuosine(34) in tRNA + A + H2O. It participates in tRNA modification; tRNA-queuosine biosynthesis. In terms of biological role, catalyzes the conversion of epoxyqueuosine (oQ) to queuosine (Q), which is a hypermodified base found in the wobble positions of tRNA(Asp), tRNA(Asn), tRNA(His) and tRNA(Tyr). In Haemophilus influenzae (strain ATCC 51907 / DSM 11121 / KW20 / Rd), this protein is Epoxyqueuosine reductase QueH.